A 311-amino-acid chain; its full sequence is Ribonuclease 3 (311 aa).

An RNase III domain is found at 20–145 (YLCFYRILGF…FIGAIYLDQG (126 aa)). Residue glutamate 62 participates in Mg(2+) binding. The active site involves aspartate 66. The Mg(2+) site is built by asparagine 131 and glutamate 134. The active site involves glutamate 134. The 70-residue stretch at 173 to 242 (NFKSKLIEWS…AQMAIKKVKD (70 aa)) folds into the DRBM domain. The tract at residues 250–311 (NEAKSQHSKP…EVEATETEKE (62 aa)) is disordered. The segment covering 262–288 (VETESVEPELTESETMEPDTLETEAPE) has biased composition (acidic residues).

This sequence belongs to the ribonuclease III family. In terms of assembly, homodimer. Mg(2+) serves as cofactor.

It is found in the cytoplasm. The enzyme catalyses Endonucleolytic cleavage to 5'-phosphomonoester.. In terms of biological role, digests double-stranded RNA. Involved in the processing of primary rRNA transcript to yield the immediate precursors to the large and small rRNAs (23S and 16S). Processes some mRNAs, and tRNAs when they are encoded in the rRNA operon. Processes pre-crRNA and tracrRNA of type II CRISPR loci if present in the organism. The polypeptide is Ribonuclease 3 (Bacteroides thetaiotaomicron (strain ATCC 29148 / DSM 2079 / JCM 5827 / CCUG 10774 / NCTC 10582 / VPI-5482 / E50)).